A 557-amino-acid chain; its full sequence is TNF receptor-associated factor 5 (557 aa).

The RING-type zinc finger occupies 45-85 (CAFCHSVLHNPHQTGCGHRFCQHCILSLRELNTVPICPVDK). 2 consecutive TRAF-type zinc fingers follow at residues 127–181 (DHLQ…INLQ) and 182–239 (NHEE…RNLQ). Positions 237 to 342 (NLQQHEHSAL…VNQQQNKFDL (106 aa)) form a coiled coil. K318 participates in a covalent cross-link: Glycyl lysine isopeptide (Lys-Gly) (interchain with G-Cter in ubiquitin). The interaction with EIF2AK2/PKR stretch occupies residues 345–557 (LMEAVDTVKQ…AVDLTDLEDL (213 aa)). In terms of domain architecture, MATH spans 403-549 (NGKLIWKVTD…DDTLFLKVAV (147 aa)).

Belongs to the TNF receptor-associated factor family. A subfamily. Homotrimer. Heteromer with TRAF3. Associates with TNFRSF5/CD40 through interaction with TRAF3. Associates with LTBR/TNFRSF3, TNFRSF4, TNFRSF8/CD30, TNFRSF11A/RANK, TNFRSF13B/TACI, TNFRSF14, TNFRSF17, TNFRSF19/TROY, RIPK2, MAP3K14, MAP3K5, and TRAF and TNF receptor associated protein TDP2. Interacts (via C-terminus) with EIF2AK2/PKR (via the kinase catalytic domain). Ubiquitinated at Lys-318 by the SCF(FBXL2) complex, leading to its degradation by the proteasome. As to expression, expressed in spleen, thymus, prostate, testis, ovary, small intestine, colon, and peripheral blood.

The protein localises to the cytoplasm. The protein resides in the cytosol. Adapter protein and signal transducer that links members of the tumor necrosis factor receptor family to different signaling pathways by association with the receptor cytoplasmic domain and kinases. Mediates activation of NF-kappa-B and probably JNK. Seems to be involved in apoptosis. Plays a role in mediating activation of NF-kappa-B by EIF2AK2/PKR. The sequence is that of TNF receptor-associated factor 5 (TRAF5) from Homo sapiens (Human).